Consider the following 123-residue polypeptide: Holo-[acyl-carrier-protein] synthase (123 aa).

Positions 8 and 55 each coordinate Mg(2+).

This sequence belongs to the P-Pant transferase superfamily. AcpS family. It depends on Mg(2+) as a cofactor.

The protein localises to the cytoplasm. It catalyses the reaction apo-[ACP] + CoA = holo-[ACP] + adenosine 3',5'-bisphosphate + H(+). In terms of biological role, transfers the 4'-phosphopantetheine moiety from coenzyme A to a Ser of acyl-carrier-protein. In Solidesulfovibrio magneticus (strain ATCC 700980 / DSM 13731 / RS-1) (Desulfovibrio magneticus), this protein is Holo-[acyl-carrier-protein] synthase.